Reading from the N-terminus, the 405-residue chain is Arginine biosynthesis bifunctional protein ArgJ (405 aa).

Substrate contacts are provided by Thr-155, Lys-181, Thr-192, Glu-278, Asn-400, and Thr-405. Thr-192 serves as the catalytic Nucleophile.

It belongs to the ArgJ family. As to quaternary structure, heterotetramer of two alpha and two beta chains.

It is found in the cytoplasm. The catalysed reaction is N(2)-acetyl-L-ornithine + L-glutamate = N-acetyl-L-glutamate + L-ornithine. It catalyses the reaction L-glutamate + acetyl-CoA = N-acetyl-L-glutamate + CoA + H(+). Its pathway is amino-acid biosynthesis; L-arginine biosynthesis; L-ornithine and N-acetyl-L-glutamate from L-glutamate and N(2)-acetyl-L-ornithine (cyclic): step 1/1. It participates in amino-acid biosynthesis; L-arginine biosynthesis; N(2)-acetyl-L-ornithine from L-glutamate: step 1/4. Its function is as follows. Catalyzes two activities which are involved in the cyclic version of arginine biosynthesis: the synthesis of N-acetylglutamate from glutamate and acetyl-CoA as the acetyl donor, and of ornithine by transacetylation between N(2)-acetylornithine and glutamate. In Dehalococcoides mccartyi (strain CBDB1), this protein is Arginine biosynthesis bifunctional protein ArgJ.